We begin with the raw amino-acid sequence, 631 residues long: Coiled-coil domain-containing protein 93 (631 aa).

2 disordered regions span residues Met1–Gln23 and Gln214–Asp243. The tract at residues Met1–Asp430 is sufficient for interaction with CCDC22. A compositionally biased stretch (basic and acidic residues) spans Ser215–Thr225. A phosphoserine mark is found at Ser298, Ser301, and Ser305. Positions Leu309–Ser631 form a coiled coil. Residues Leu421–Thr433 are compositionally biased toward basic and acidic residues. The tract at residues Leu421 to Met447 is disordered. The segment at Thr448–Ser631 is sufficient for interaction with WASHC2C.

The protein belongs to the CCDC93 family. In terms of assembly, component of the commander complex consisting of the CCC subcomplex and the retriever subcomplex. Component of the CCC (COMMD/CCDC22/CCDC93) subcomplex consisting of COMMD1, COMMD2, COMMD3, COMMD4, COMMD5, COMMD6, COMMD7, COMMD8, COMMD9, COMMD10, CCDC22 and CCDC93. Forms a coiled-coil heterodimer with CCDC22; this heterodimer interacts with the guanine nucleotide exchange factor DENND10; the interaction is direct. Interacts with WASHC1. Interacts directly with WASHC2C. Interacts with SNX17 and SNX31.

The protein resides in the early endosome. In terms of biological role, component of the commander complex that is essential for endosomal recycling of transmembrane cargos; the commander complex is composed of composed of the CCC subcomplex and the retriever subcomplex. Component of the CCC complex, which is involved in the regulation of endosomal recycling of surface proteins, including integrins, signaling receptor and channels. The CCC complex associates with SNX17, retriever and WASH complexes to prevent lysosomal degradation and promote cell surface recycling of numerous cargos such as integrins ITGA5:ITGB1. Involved in copper-dependent ATP7A trafficking between the trans-Golgi network and vesicles in the cell periphery; the function is proposed to depend on its association within the CCC complex and cooperation with the WASH complex on early endosomes and is dependent on its interaction with WASHC2C. (Microbial infection) The CCC complex, in collaboration with the heterotrimeric retriever complex, mediates the exit of human papillomavirus to the cell surface. This is Coiled-coil domain-containing protein 93 (CCDC93) from Homo sapiens (Human).